A 296-amino-acid chain; its full sequence is Antisense-enhancing sequence 1 (296 aa).

E47 is a catalytic residue.

This sequence belongs to the PhzF family.

Its function is as follows. May have isomerase activity. Enhances target gene silencing when coexpressed with antisense RNA. In Schizosaccharomyces pombe (strain 972 / ATCC 24843) (Fission yeast), this protein is Antisense-enhancing sequence 1 (aes1).